The chain runs to 249 residues: Mannose-binding protein C (249 aa).

An N-terminal signal peptide occupies residues 1-20 (MSLFTSLPFLLLTAVTASCA). One can recognise a Collagen-like domain in the interval 43-101 (GINGIPGKDGRDGAKGEKGEPGQGLRGSQGPPGKMGPQGTPGIPGIPGPIGQKGDPGEN). The disordered stretch occupies residues 43–103 (GINGIPGKDG…QKGDPGENMG (61 aa)). The residue at position 48 (Pro-48) is a 4-hydroxyproline. The segment covering 50-62 (KDGRDGAKGEKGE) has biased composition (basic and acidic residues). 4 positions are modified to 4-hydroxyproline: Pro-63, Pro-74, Pro-83, and Pro-86. Positions 79–95 (PQGTPGIPGIPGPIGQK) are enriched in low complexity. Positions 113–131 (RATLQSELNQIKNWLIFSL) form a coiled coil. In terms of domain architecture, C-type lectin spans 135-246 (VGKKAFFTNG…CSASFLTVCE (112 aa)). Cystine bridges form between Cys-156–Cys-245 and Cys-223–Cys-237.

As to quaternary structure, oligomeric complex of 3 or more homotrimers. Interacts with MASP1 and MASP2. Interacts with MEP1A and MEP1B and may inhibit their catalytic activity. Post-translationally, hydroxylation on proline residues within the sequence motif, GXPG, is most likely to be 4-hydroxy as this fits the requirement for 4-hydroxylation in vertebrates.

The protein localises to the secreted. Functionally, calcium-dependent lectin involved in innate immune defense. Binds mannose, fucose and N-acetylglucosamine on different microorganisms and activates the lectin complement pathway. Binds to late apoptotic cells, as well as to apoptotic blebs and to necrotic cells, but not to early apoptotic cells, facilitating their uptake by macrophages. The chain is Mannose-binding protein C (MBL) from Bos taurus (Bovine).